Reading from the N-terminus, the 129-residue chain is Small ribosomal subunit protein uS8 (129 aa).

It belongs to the universal ribosomal protein uS8 family. Part of the 30S ribosomal subunit.

Functionally, one of the primary rRNA binding proteins, it binds directly to 16S rRNA central domain where it helps coordinate assembly of the platform of the 30S subunit. This is Small ribosomal subunit protein uS8 from Thermoplasma acidophilum (strain ATCC 25905 / DSM 1728 / JCM 9062 / NBRC 15155 / AMRC-C165).